The following is an 84-amino-acid chain: uncharacterized protein (84 aa).

Its function is as follows. This protein may be involved in virus assembly. This is an uncharacterized protein from Saccharolobus solfataricus (Sulfolobus solfataricus).